Consider the following 122-residue polypeptide: MLAGCFNLSGYSYKCNSLLHHQLPITNYQFSNHQIKSSGEVMYQEDIYNSQNVKKINNEQVDQIIKSIIAGKYSWACVLLLRYSGYNPIDYIPYRTYIRLLKNNCLGGKNQEGRNDSQEVLI.

It belongs to the HetP family. In terms of assembly, in bacterial two-hybrid assays interacts robustly with itself, Asl1930, Alr2902 and HetR and weakly with HetP.

Its function is as follows. Delays heterocyst differentiation and commitment when nitrogen is limiting. Interplay between the 4 HetP paralogs controls the timing of commitment to heterocyst formation and its duration. Epistatic analysis show that the 3 paralogs act upstream of hetP to delay commitment (asl1930, alr3234) or inhibit development (alr2902). Asl1930 and Alr3234 must also attenuate the activity of Alr2902. Ectopic expression does not complement a hetP deletion. This is HetP-like commitment protein Alr3234 from Nostoc sp. (strain PCC 7120 / SAG 25.82 / UTEX 2576).